Reading from the N-terminus, the 499-residue chain is Myocyte-specific enhancer factor 2A (499 aa).

The 55-residue stretch at 3-57 folds into the MADS-box domain; it reads RKKIQITRIMDERNRQVTFTKRKFGLMKKAYELSVLCDCEIALIIFNSSNKLFQY. An N6-acetyllysine modification is found at K4. The mef2-type DNA-binding region spans 58–86; that stretch reads ASTDMDKVLLKYTEYNEPHESRTNSDIVE. An N6-acetyllysine modification is found at K117. A compositionally biased stretch (low complexity) spans 173-185; that stretch reads TSTTMLSPPQTTL. The interval 173 to 269 is disordered; sequence TSTTMLSPPQ…GGGLGMNNRK (97 aa). A compositionally biased stretch (polar residues) spans 210-233; the sequence is TDLTVPNGAGTSPVGNGVWNSRAS. An N6-acetyllysine mark is found at K248, K253, K269, and K281. Residues 265 to 282 are required for interaction with MAPKs; the sequence is MNNRKPDLRVVIPPSSKG. Residues 288 to 295 are beta domain; it reads TEEDELEL. Low complexity predominate over residues 380-392; the sequence is VSGSQLSQGSNLS. A disordered region spans residues 380–499; it reads VSGSQLSQGS…KRMRMDTWVT (120 aa). N6-acetyllysine; alternate is present on K402. Residue K402 forms a Glycyl lysine isopeptide (Lys-Gly) (interchain with G-Cter in SUMO); alternate linkage. The segment covering 421 to 436 has biased composition (pro residues); sequence QQPPQQPQPPQPPQQP. The segment covering 445-458 has biased composition (low complexity); sequence SPVDSLSSSSSSYD. Basic and acidic residues-rich tracts occupy residues 459 to 469 and 480 to 499; these read GSDREDPRSDF and NSED…TWVT.

As to quaternary structure, binds DNA as a homo- or heterodimer. In terms of processing, sumoylation on Lys-402 is enhanced by PIAS1 and represses transcriptional activity. Has no effect on nuclear location nor on DNA binding. Sumoylated by SUMO1 and, to a lesser extent by SUMO2 and SUMO3. Acetylation on Lys-402 activates transcriptional activity. Expressed in both embryonic and adult tissues with high expression in heart and skeletal muscle. Also expressed in gut, lung and brain of 15 dpc embryos and adults.

Its subcellular location is the nucleus. Its function is as follows. Transcriptional activator which binds specifically to the MEF2 element, 5'-YTA[AT](4)TAR-3', found in numerous muscle-specific genes. Mediates cellular functions in skeletal and cardiac muscle development,. The chain is Myocyte-specific enhancer factor 2A (MEF2A) from Gallus gallus (Chicken).